Consider the following 205-residue polypeptide: N-(5'-phosphoribosyl)anthranilate isomerase (205 aa).

This sequence belongs to the TrpF family.

It carries out the reaction N-(5-phospho-beta-D-ribosyl)anthranilate = 1-(2-carboxyphenylamino)-1-deoxy-D-ribulose 5-phosphate. It functions in the pathway amino-acid biosynthesis; L-tryptophan biosynthesis; L-tryptophan from chorismate: step 3/5. The protein is N-(5'-phosphoribosyl)anthranilate isomerase of Acidithiobacillus ferrooxidans (strain ATCC 23270 / DSM 14882 / CIP 104768 / NCIMB 8455) (Ferrobacillus ferrooxidans (strain ATCC 23270)).